We begin with the raw amino-acid sequence, 208 residues long: Cell death-inducing p53-target protein 1 (208 aa).

2 stretches are compositionally biased toward pro residues: residues 1–13 and 36–67; these read MSSE…PGGP and MQPP…PGFI. Residues 1 to 71 are disordered; sequence MSSEPPPPYP…PQPGFIPPHM (71 aa). The LITAF domain maps to 122 to 206; it reads ATTVTVLQGE…CKAYIYTYKR (85 aa). Residues cysteine 142 and cysteine 145 each contribute to the Zn(2+) site. Positions 164–184 are membrane-binding amphipathic helix; the sequence is LGFFCCFMGCDLGCCLIPCLI. 2 residues coordinate Zn(2+): cysteine 194 and cysteine 197.

This sequence belongs to the CDIP1/LITAF family. Highly expressed in brain. Expressed at lower level in heart, skeletal muscle, kidney, pancreas and liver. Weakly or not expressed in placenta and lung.

Its subcellular location is the late endosome membrane. The protein resides in the lysosome membrane. Acts as an important p53/TP53-apoptotic effector. Regulates TNF-alpha-mediated apoptosis in a p53/TP53-dependent manner. The sequence is that of Cell death-inducing p53-target protein 1 (CDIP1) from Homo sapiens (Human).